The following is a 124-amino-acid chain: Small ribosomal subunit protein uS13 (124 aa).

The interval 94–124 (GLPLRGQRTKNNSRTRKGKRKTVANKKKATK) is disordered. Positions 100–124 (QRTKNNSRTRKGKRKTVANKKKATK) are enriched in basic residues.

The protein belongs to the universal ribosomal protein uS13 family. Part of the 30S ribosomal subunit. Forms a loose heterodimer with protein S19. Forms two bridges to the 50S subunit in the 70S ribosome.

Functionally, located at the top of the head of the 30S subunit, it contacts several helices of the 16S rRNA. In the 70S ribosome it contacts the 23S rRNA (bridge B1a) and protein L5 of the 50S subunit (bridge B1b), connecting the 2 subunits; these bridges are implicated in subunit movement. Contacts the tRNAs in the A and P-sites. This is Small ribosomal subunit protein uS13 from Flavobacterium psychrophilum (strain ATCC 49511 / DSM 21280 / CIP 103535 / JIP02/86).